A 498-amino-acid polypeptide reads, in one-letter code: MEKYILSIDQGTTSSRAILFNQKGEIAGVAQREFKQYFPQSGWVEHDANEIWTSVLAVMTEVINENDVRADQIAGIGITNQRETTVVWDKHTGRPIYHAIVWQSRQTQSICSELKQQGYEQTFRDKTGLLLDPYFAGTKVKWILDNVEGAREKAENGDLLFGTIDTWLVWKLSGKAAHITDYSNASRTLMFNIHDLEWDDELLELLTVPKNMLPEVKASSEVYGKTIDYHFYGQEVPIAGVAGDQQAALFGQACFERGDVKNTYGTGGFMLMNTGDKAVKSESGLLTTIAYGIDGKVNYALEGSIFVSGSAIQWLRDGLRMINSAPQSESYATRVDSTEGVYVVPAFVGLGTPYWDSEARGAIFGLTRGTEKEHFIRATLESLCYQTRDVMEAMSKDSGIDVQSLRVDGGAVKNNFIMQFQADIVNTSVERPEIQETTALGAAFLAGLAVGFWESKDDIAKNWKLEEKFDPKMDEGEREKLYRGWKKAVEATQVFKTE.

T12 lines the ADP pocket. Residues T12, T13, and S14 each contribute to the ATP site. Residue T12 coordinates sn-glycerol 3-phosphate. R16 contributes to the ADP binding site. Sn-glycerol 3-phosphate-binding residues include R82, E83, and Y134. Glycerol is bound by residues R82, E83, and Y134. H230 carries the phosphohistidine; by HPr modification. Residue D244 coordinates sn-glycerol 3-phosphate. Residues D244 and Q245 each coordinate glycerol. ADP contacts are provided by T266, G309, Q313, G410, and N414. The ATP site is built by T266, G309, Q313, and G410.

Belongs to the FGGY kinase family. In terms of assembly, homotetramer and homodimer (in equilibrium). In terms of processing, the phosphoenolpyruvate-dependent sugar phosphotransferase system (PTS), including enzyme I, and histidine-containing protein (HPr) are required for the phosphorylation, which leads to the activation of the enzyme.

It catalyses the reaction glycerol + ATP = sn-glycerol 3-phosphate + ADP + H(+). It participates in polyol metabolism; glycerol degradation via glycerol kinase pathway; sn-glycerol 3-phosphate from glycerol: step 1/1. Its activity is regulated as follows. Activated by phosphorylation and inhibited by fructose 1,6-bisphosphate (FBP). Functionally, key enzyme in the regulation of glycerol uptake and metabolism. Catalyzes the phosphorylation of glycerol to yield sn-glycerol 3-phosphate. This Staphylococcus aureus (strain COL) protein is Glycerol kinase.